Reading from the N-terminus, the 509-residue chain is Maturase K (509 aa).

This sequence belongs to the intron maturase 2 family. MatK subfamily.

It localises to the plastid. Its subcellular location is the chloroplast. Its function is as follows. Usually encoded in the trnK tRNA gene intron. Probably assists in splicing its own and other chloroplast group II introns. The chain is Maturase K from Nicotiana rustica (Aztec tobacco).